A 64-amino-acid chain; its full sequence is Conotoxin Cal6.26 (64 aa).

An N-terminal signal peptide occupies residues 1 to 22 (MKLTCVMIVAVLVLTVCKVVTS). 3 cysteine pairs are disulfide-bonded: Cys-32–Cys-50, Cys-40–Cys-54, and Cys-49–Cys-60.

As to expression, expressed by the venom duct.

It localises to the secreted. Functionally, probable neurotoxin. The polypeptide is Conotoxin Cal6.26 (Californiconus californicus (California cone)).